Here is a 391-residue protein sequence, read N- to C-terminus: Glycerol-3-phosphate dehydrogenase [NAD(+)] (391 aa).

NAD(+) contacts are provided by residues 46–51 (GSGNWG), Phe78, and Phe134. Residue Lys157 coordinates substrate. Ala190 lines the NAD(+) pocket. Lys250 functions as the Proton acceptor in the catalytic mechanism. The NAD(+) site is built by Arg315 and Gln344. Position 315–316 (315–316 (RN)) interacts with substrate.

This sequence belongs to the NAD-dependent glycerol-3-phosphate dehydrogenase family.

It carries out the reaction sn-glycerol 3-phosphate + NAD(+) = dihydroxyacetone phosphate + NADH + H(+). This is Glycerol-3-phosphate dehydrogenase [NAD(+)] (GPD) from Candida tropicalis (Yeast).